Consider the following 158-residue polypeptide: MRIGLGYDVHRLVENRKLILGGVEIPYEKGLLGHSDADVLIHAIIDSLLGACALGDIGKHFPDTDSRFSGISSIILLEETGKLLLKSGYAINNIDATIIAQKPKMLPHIENMRKNISIALNIDINKINIKATTEEGLGFTGEMLGISSQSISSVESII.

The a divalent metal cation site is built by D8 and H10. Residues 8-10 (DVH) and 34-35 (HS) contribute to the 4-CDP-2-C-methyl-D-erythritol 2-phosphate site. H42 contacts a divalent metal cation. 4-CDP-2-C-methyl-D-erythritol 2-phosphate contacts are provided by residues 56-58 (DIG), 61-65 (FPDTD), 100-106 (AQKPKML), 132-135 (TTEE), and F139.

Belongs to the IspF family. In terms of assembly, homotrimer. Requires a divalent metal cation as cofactor.

The catalysed reaction is 4-CDP-2-C-methyl-D-erythritol 2-phosphate = 2-C-methyl-D-erythritol 2,4-cyclic diphosphate + CMP. It functions in the pathway isoprenoid biosynthesis; isopentenyl diphosphate biosynthesis via DXP pathway; isopentenyl diphosphate from 1-deoxy-D-xylulose 5-phosphate: step 4/6. In terms of biological role, involved in the biosynthesis of isopentenyl diphosphate (IPP) and dimethylallyl diphosphate (DMAPP), two major building blocks of isoprenoid compounds. Catalyzes the conversion of 4-diphosphocytidyl-2-C-methyl-D-erythritol 2-phosphate (CDP-ME2P) to 2-C-methyl-D-erythritol 2,4-cyclodiphosphate (ME-CPP) with a corresponding release of cytidine 5-monophosphate (CMP). This Clostridium beijerinckii (strain ATCC 51743 / NCIMB 8052) (Clostridium acetobutylicum) protein is 2-C-methyl-D-erythritol 2,4-cyclodiphosphate synthase.